Consider the following 209-residue polypeptide: Orotate phosphoribosyltransferase (209 aa).

5-phospho-alpha-D-ribose 1-diphosphate contacts are provided by residues R98, K102, H104, and 124-132; that span reads EDLISTGKS. Orotate is bound at residue S128.

This sequence belongs to the purine/pyrimidine phosphoribosyltransferase family. PyrE subfamily. As to quaternary structure, homodimer. Mg(2+) serves as cofactor.

The catalysed reaction is orotidine 5'-phosphate + diphosphate = orotate + 5-phospho-alpha-D-ribose 1-diphosphate. It participates in pyrimidine metabolism; UMP biosynthesis via de novo pathway; UMP from orotate: step 1/2. Catalyzes the transfer of a ribosyl phosphate group from 5-phosphoribose 1-diphosphate to orotate, leading to the formation of orotidine monophosphate (OMP). This Malacoplasma penetrans (strain HF-2) (Mycoplasma penetrans) protein is Orotate phosphoribosyltransferase.